We begin with the raw amino-acid sequence, 88 residues long: Putative sulfur carrier protein AF_0554 (88 aa).

Residue Cys-26 is the Cysteine persulfide intermediate of the active site.

Belongs to the sulfur carrier protein TusA family.

The chain is Putative sulfur carrier protein AF_0554 from Archaeoglobus fulgidus (strain ATCC 49558 / DSM 4304 / JCM 9628 / NBRC 100126 / VC-16).